Reading from the N-terminus, the 261-residue chain is Aromatic peroxygenase (261 aa).

A heme-binding site is contributed by Cys36. 4 N-linked (GlcNAc...) asparagine glycosylation sites follow: Asn100, Asn137, Asn141, and Asn220.

Belongs to the chloroperoxidase family. It depends on heme b as a cofactor. In terms of processing, N-glycosylated.

In terms of biological role, aromatic peroxidase that oxidizes aryl alcohols into the corresponding aldehydes and then into the corresponding benzoic acids. Catalyzes the regioselective peroxide-dependent hydroxylation of naphthalene to 1-naphthol and to a far lesser extent 2-naphthol via a naphthalene 1,2-oxide intermediate. Halogenates phenol to 2-bromophenol and 4-bromophenol. Oxidizes the sulfur-containing heterocycle dibenzothiophene to yield sulfoxidation products, and trace amounts of ring-hydroxylation products. In Coprinellus radians (Coprophilous mushroom), this protein is Aromatic peroxygenase.